The primary structure comprises 129 residues: MKLCERLRELRQERGLRLKDIAGAAQISVPYLSDLERGRTNPSLETLQSLASTYGITVHDLLEGVEFYGDQTAGALPQGLADLIADPALGAQLTPDWIRTLARIELRGKRPRDKQDWFEIYLHLKRILD.

The HTH cro/C1-type domain occupies 7-61 (LRELRQERGLRLKDIAGAAQISVPYLSDLERGRTNPSLETLQSLASTYGITVHDL). Residues 18–37 (LKDIAGAAQISVPYLSDLER) constitute a DNA-binding region (H-T-H motif).

In terms of processing, cleaved between Leu-106 and Arg-107 by the IrrE metalloprotease after exposure to radiation. Cleavage inactivates DdrOP3, leading to derepression of the target genes.

In terms of biological role, repressor specific for genes preceded by a radiation/desiccation response motif (RDRM) site, which is present upstream of several radiation-induced genes. This chain is HTH-type transcriptional regulator DdrOP3, found in Deinococcus deserti (strain DSM 17065 / CIP 109153 / LMG 22923 / VCD115).